The primary structure comprises 137 residues: Basic phospholipase A2 homolog Cax-K49 (137 aa).

Positions 1 to 16 are cleaved as a signal peptide; sequence MRTFWIVAMLLVGVEG. 7 cysteine pairs are disulfide-bonded: cysteine 42–cysteine 131, cysteine 44–cysteine 60, cysteine 59–cysteine 111, cysteine 65–cysteine 137, cysteine 66–cysteine 104, cysteine 73–cysteine 97, and cysteine 91–cysteine 102. Residues 121-133 form an important for membrane-damaging activities in eukaryotes and bacteria; heparin-binding region; sequence KKYKIYPKFLCKK.

As to quaternary structure, homodimer; non-covalently linked. Expressed by the venom gland.

It is found in the secreted. Its function is as follows. Snake venom phospholipase A2 homolog that lacks enzymatic activity. Displays edema-inducing activities and may be myotoxic. A model of myotoxic mechanism has been proposed: an apo Lys49-PLA2 is activated by the entrance of a hydrophobic molecule (e.g. fatty acid) at the hydrophobic channel of the protein leading to a reorientation of a monomer. This reorientation causes a transition between 'inactive' to 'active' states, causing alignment of C-terminal and membrane-docking sites (MDoS) side-by-side and putting the membrane-disruption sites (MDiS) in the same plane, exposed to solvent and in a symmetric position for both monomers. The MDoS region stabilizes the toxin on membrane by the interaction of charged residues with phospholipid head groups. Subsequently, the MDiS region destabilizes the membrane with penetration of hydrophobic residues. This insertion causes a disorganization of the membrane, allowing an uncontrolled influx of ions (i.e. calcium and sodium), and eventually triggering irreversible intracellular alterations and cell death. The protein is Basic phospholipase A2 homolog Cax-K49 of Crotalus atrox (Western diamondback rattlesnake).